Here is a 320-residue protein sequence, read N- to C-terminus: o-succinylbenzoate synthase (320 aa).

Lys133 serves as the catalytic Proton donor. Residues Asp161, Glu190, and Asp213 each contribute to the Mg(2+) site. Lys235 functions as the Proton acceptor in the catalytic mechanism.

This sequence belongs to the mandelate racemase/muconate lactonizing enzyme family. MenC type 1 subfamily. The cofactor is a divalent metal cation.

The enzyme catalyses (1R,6R)-6-hydroxy-2-succinyl-cyclohexa-2,4-diene-1-carboxylate = 2-succinylbenzoate + H2O. It participates in quinol/quinone metabolism; 1,4-dihydroxy-2-naphthoate biosynthesis; 1,4-dihydroxy-2-naphthoate from chorismate: step 4/7. The protein operates within quinol/quinone metabolism; menaquinone biosynthesis. Converts 2-succinyl-6-hydroxy-2,4-cyclohexadiene-1-carboxylate (SHCHC) to 2-succinylbenzoate (OSB). The protein is o-succinylbenzoate synthase of Salmonella choleraesuis (strain SC-B67).